A 608-amino-acid chain; its full sequence is Threonine--tRNA ligase (608 aa).

The tract at residues Met-1–Pro-145 is editing domain. 2 catalytic regions span residues Pro-192 to Pro-489 and Lys-193 to Pro-489. Zn(2+) contacts are provided by Cys-286, His-337, and His-458.

It belongs to the class-II aminoacyl-tRNA synthetase family. In terms of assembly, homodimer. Zn(2+) is required as a cofactor.

The protein localises to the cytoplasm. The catalysed reaction is tRNA(Thr) + L-threonine + ATP = L-threonyl-tRNA(Thr) + AMP + diphosphate + H(+). Functionally, catalyzes the attachment of threonine to tRNA(Thr) in a two-step reaction: L-threonine is first activated by ATP to form Thr-AMP and then transferred to the acceptor end of tRNA(Thr). Also edits incorrectly charged L-seryl-tRNA(Thr). This Thermofilum pendens (strain DSM 2475 / Hrk 5) protein is Threonine--tRNA ligase.